Here is a 251-residue protein sequence, read N- to C-terminus: Triosephosphate isomerase (251 aa).

9–11 (NWK) is a binding site for substrate. H95 acts as the Electrophile in catalysis. The active-site Proton acceptor is E167. Residues G173, S212, and 233–234 (GG) each bind substrate.

Belongs to the triosephosphate isomerase family. In terms of assembly, homodimer.

Its subcellular location is the cytoplasm. The catalysed reaction is D-glyceraldehyde 3-phosphate = dihydroxyacetone phosphate. The protein operates within carbohydrate biosynthesis; gluconeogenesis. Its pathway is carbohydrate degradation; glycolysis; D-glyceraldehyde 3-phosphate from glycerone phosphate: step 1/1. Its function is as follows. Involved in the gluconeogenesis. Catalyzes stereospecifically the conversion of dihydroxyacetone phosphate (DHAP) to D-glyceraldehyde-3-phosphate (G3P). In Pseudomonas savastanoi pv. phaseolicola (strain 1448A / Race 6) (Pseudomonas syringae pv. phaseolicola (strain 1448A / Race 6)), this protein is Triosephosphate isomerase.